We begin with the raw amino-acid sequence, 154 residues long: UPF0225 protein SG1365 (154 aa).

This sequence belongs to the UPF0225 family.

The sequence is that of UPF0225 protein SG1365 from Sodalis glossinidius (strain morsitans).